The primary structure comprises 258 residues: Leucyl/phenylalanyl-tRNA--protein transferase (258 aa).

Belongs to the L/F-transferase family.

The protein localises to the cytoplasm. The enzyme catalyses N-terminal L-lysyl-[protein] + L-leucyl-tRNA(Leu) = N-terminal L-leucyl-L-lysyl-[protein] + tRNA(Leu) + H(+). The catalysed reaction is N-terminal L-arginyl-[protein] + L-leucyl-tRNA(Leu) = N-terminal L-leucyl-L-arginyl-[protein] + tRNA(Leu) + H(+). It carries out the reaction L-phenylalanyl-tRNA(Phe) + an N-terminal L-alpha-aminoacyl-[protein] = an N-terminal L-phenylalanyl-L-alpha-aminoacyl-[protein] + tRNA(Phe). In terms of biological role, functions in the N-end rule pathway of protein degradation where it conjugates Leu, Phe and, less efficiently, Met from aminoacyl-tRNAs to the N-termini of proteins containing an N-terminal arginine or lysine. The chain is Leucyl/phenylalanyl-tRNA--protein transferase from Alkalilimnicola ehrlichii (strain ATCC BAA-1101 / DSM 17681 / MLHE-1).